Reading from the N-terminus, the 180-residue chain is NAD(P)H-quinone oxidoreductase subunit I, chloroplastic (180 aa).

4Fe-4S ferredoxin-type domains lie at 55-84 (GRIH…VDWR) and 95-124 (LNYS…MTEE). The [4Fe-4S] cluster site is built by Cys64, Cys67, Cys70, Cys74, Cys104, Cys107, Cys110, and Cys114.

The protein belongs to the complex I 23 kDa subunit family. NDH is composed of at least 16 different subunits, 5 of which are encoded in the nucleus. Requires [4Fe-4S] cluster as cofactor.

The protein resides in the plastid. It localises to the chloroplast thylakoid membrane. The catalysed reaction is a plastoquinone + NADH + (n+1) H(+)(in) = a plastoquinol + NAD(+) + n H(+)(out). It carries out the reaction a plastoquinone + NADPH + (n+1) H(+)(in) = a plastoquinol + NADP(+) + n H(+)(out). NDH shuttles electrons from NAD(P)H:plastoquinone, via FMN and iron-sulfur (Fe-S) centers, to quinones in the photosynthetic chain and possibly in a chloroplast respiratory chain. The immediate electron acceptor for the enzyme in this species is believed to be plastoquinone. Couples the redox reaction to proton translocation, and thus conserves the redox energy in a proton gradient. The sequence is that of NAD(P)H-quinone oxidoreductase subunit I, chloroplastic from Liriodendron tulipifera (Tuliptree).